A 325-amino-acid polypeptide reads, in one-letter code: Beta-ketoacyl-[acyl-carrier-protein] synthase III (325 aa).

Active-site residues include Cys-112 and His-250. An ACP-binding region spans residues 251–255; that stretch reads QANSR. Asn-280 is a catalytic residue.

This sequence belongs to the thiolase-like superfamily. FabH family. As to quaternary structure, homodimer.

The protein resides in the cytoplasm. It catalyses the reaction malonyl-[ACP] + acetyl-CoA + H(+) = 3-oxobutanoyl-[ACP] + CO2 + CoA. It participates in lipid metabolism; fatty acid biosynthesis. Functionally, catalyzes the condensation reaction of fatty acid synthesis by the addition to an acyl acceptor of two carbons from malonyl-ACP. Catalyzes the first condensation reaction which initiates fatty acid synthesis and may therefore play a role in governing the total rate of fatty acid production. Possesses both acetoacetyl-ACP synthase and acetyl transacylase activities. Its substrate specificity determines the biosynthesis of branched-chain and/or straight-chain of fatty acids. The protein is Beta-ketoacyl-[acyl-carrier-protein] synthase III of Lactococcus lactis subsp. lactis (strain IL1403) (Streptococcus lactis).